A 154-amino-acid chain; its full sequence is MQLKALLEPLVTRMGYQLWGMEFRVAKHSALLRLFIDSEQGITLDDCTEVSRQVSALMDVEDPIQVPYTLEVSSPGVDRPLFEAGQYARYVGEQVRVRTQWPIDGQRNFAGAIVSADEDSVTLDVDGREVRLPLEAIARGRLKGTLPPATQVEE.

This sequence belongs to the RimP family.

It localises to the cytoplasm. Functionally, required for maturation of 30S ribosomal subunits. This chain is Ribosome maturation factor RimP, found in Thioalkalivibrio sulfidiphilus (strain HL-EbGR7).